Consider the following 115-residue polypeptide: Protein V2 (115 aa).

The protein belongs to the geminiviridae protein AV2/V2 family. Interacts with host SGS3.

The protein localises to the host cytoplasm. The protein resides in the host perinuclear region. Functionally, through its interaction with host SGS3, acts as a suppressor of RNA-mediated gene silencing, also known as post-transcriptional gene silencing (PTGS), a mechanism of plant viral defense that limits the accumulation of viral RNAs. This Tomato yellow leaf curl China virus (TYLCCNV) protein is Protein V2.